The sequence spans 617 residues: Putative type VI secretion system protein VgrGA (617 aa).

2 disordered regions span residues 325-344 and 449-469; these read GQQP…TLSN and RTFH…TRTS.

It belongs to the VgrG protein family.

In terms of biological role, a Vgr protein that is probably part of a type VI secretion system (T6SS). May be required for export of proteins involved in Rhs-mediated cellular contact-dependent growth inhibition (CDI). The protein is Putative type VI secretion system protein VgrGA (vgrGA) of Dickeya dadantii (strain 3937) (Erwinia chrysanthemi (strain 3937)).